We begin with the raw amino-acid sequence, 512 residues long: Catalase (512 aa).

Active-site residues include His60 and Asn133. Tyr344 contributes to the heme binding site. A Phosphoserine modification is found at Ser363. The segment covering 488 to 505 has biased composition (basic and acidic residues); sequence EVKKMEEKAPKPINKGEP. The interval 488-512 is disordered; that stretch reads EVKKMEEKAPKPINKGEPHMFQGSS.

Belongs to the catalase family. Requires heme as cofactor.

Its subcellular location is the peroxisome matrix. It carries out the reaction 2 H2O2 = O2 + 2 H2O. Its function is as follows. Catalyzes the degradation of hydrogen peroxide (H(2)O(2)) generated by peroxisomal oxidases to water and oxygen, thereby protecting cells from the toxic effects of hydrogen peroxide. In Schizosaccharomyces pombe (strain 972 / ATCC 24843) (Fission yeast), this protein is Catalase (cta1).